We begin with the raw amino-acid sequence, 200 residues long: Endoribonuclease YbeY (200 aa).

Zn(2+)-binding residues include histidine 120, histidine 124, and histidine 130.

Belongs to the endoribonuclease YbeY family. Zn(2+) is required as a cofactor.

It localises to the cytoplasm. Single strand-specific metallo-endoribonuclease involved in late-stage 70S ribosome quality control and in maturation of the 3' terminus of the 16S rRNA. This is Endoribonuclease YbeY from Corynebacterium efficiens (strain DSM 44549 / YS-314 / AJ 12310 / JCM 11189 / NBRC 100395).